The chain runs to 153 residues: Nucleoside diphosphate kinase (153 aa).

Residues lysine 13, phenylalanine 61, arginine 89, threonine 95, arginine 106, and asparagine 116 each contribute to the ATP site. Histidine 119 serves as the catalytic Pros-phosphohistidine intermediate.

This sequence belongs to the NDK family. Requires Mg(2+) as cofactor.

The protein resides in the cytoplasm. Its subcellular location is the cell membrane. It carries out the reaction a 2'-deoxyribonucleoside 5'-diphosphate + ATP = a 2'-deoxyribonucleoside 5'-triphosphate + ADP. The catalysed reaction is a ribonucleoside 5'-diphosphate + ATP = a ribonucleoside 5'-triphosphate + ADP. In terms of biological role, major role in the synthesis of nucleoside triphosphates other than ATP. The ATP gamma phosphate is transferred to the NDP beta phosphate via a ping-pong mechanism, using a phosphorylated active-site intermediate. The polypeptide is Nucleoside diphosphate kinase (Gallus gallus (Chicken)).